Consider the following 102-residue polypeptide: Mitochondrial import inner membrane translocase subunit Tim10 B (102 aa).

The Twin CX3C motif signature appears at 27–51; sequence CFQRCVPSLHHRALDAEEEACLHSC. Disulfide bonds link Cys27–Cys51 and Cys31–Cys47.

Component of the TIM22 complex, which core is composed of TIMM22, associated with TIMM10 (TIMM10A and/or TIMM10B), TIMM9, AGK and TIMM29.

It localises to the mitochondrion inner membrane. Component of the TIM22 complex, a complex that mediates the import and insertion of multi-pass transmembrane proteins into the mitochondrial inner membrane. The TIM22 complex forms a twin-pore translocase that uses the membrane potential as the external driving force. In the TIM22 complex, it may act as a docking point for the soluble 70 kDa complex that guides the target proteins in transit through the aqueous mitochondrial intermembrane space. In Pongo abelii (Sumatran orangutan), this protein is Mitochondrial import inner membrane translocase subunit Tim10 B (TIMM10B).